A 519-amino-acid chain; its full sequence is ATP synthase subunit alpha (519 aa).

Position 175–182 (175–182) interacts with ATP; the sequence is GDRQTGKT.

The protein belongs to the ATPase alpha/beta chains family. In terms of assembly, F-type ATPases have 2 components, CF(1) - the catalytic core - and CF(0) - the membrane proton channel. CF(1) has five subunits: alpha(3), beta(3), gamma(1), delta(1), epsilon(1). CF(0) has three main subunits: a(1), b(2) and c(9-12). The alpha and beta chains form an alternating ring which encloses part of the gamma chain. CF(1) is attached to CF(0) by a central stalk formed by the gamma and epsilon chains, while a peripheral stalk is formed by the delta and b chains.

The protein resides in the cell inner membrane. It catalyses the reaction ATP + H2O + 4 H(+)(in) = ADP + phosphate + 5 H(+)(out). In terms of biological role, produces ATP from ADP in the presence of a proton gradient across the membrane. The alpha chain is a regulatory subunit. The protein is ATP synthase subunit alpha of Acinetobacter baylyi (strain ATCC 33305 / BD413 / ADP1).